The sequence spans 346 residues: tRNA N6-adenosine threonylcarbamoyltransferase (346 aa).

Histidine 111 and histidine 115 together coordinate Fe cation. Substrate is bound by residues 134-138 (LVSGG), aspartate 167, glycine 180, aspartate 184, and asparagine 279. Residue aspartate 307 participates in Fe cation binding.

It belongs to the KAE1 / TsaD family. The cofactor is Fe(2+).

The protein resides in the cytoplasm. The enzyme catalyses L-threonylcarbamoyladenylate + adenosine(37) in tRNA = N(6)-L-threonylcarbamoyladenosine(37) in tRNA + AMP + H(+). Required for the formation of a threonylcarbamoyl group on adenosine at position 37 (t(6)A37) in tRNAs that read codons beginning with adenine. Is involved in the transfer of the threonylcarbamoyl moiety of threonylcarbamoyl-AMP (TC-AMP) to the N6 group of A37, together with TsaE and TsaB. TsaD likely plays a direct catalytic role in this reaction. The chain is tRNA N6-adenosine threonylcarbamoyltransferase from Nostoc sp. (strain PCC 7120 / SAG 25.82 / UTEX 2576).